The sequence spans 136 residues: FK506-binding protein 2 (136 aa).

The N-terminal stretch at 1 to 17 (MLSQIWILFTFMVCVIA) is a signal peptide. The region spanning 45-134 (GDMVSVHYTG…DFDVELVDIA (90 aa)) is the PPIase FKBP-type domain.

Belongs to the FKBP-type PPIase family. FKBP2 subfamily.

It localises to the endoplasmic reticulum. The enzyme catalyses [protein]-peptidylproline (omega=180) = [protein]-peptidylproline (omega=0). Inhibited by both FK506 and rapamycin. PPIases accelerate the folding of proteins. It catalyzes the cis-trans isomerization of proline imidic peptide bonds in oligopeptides. In Candida glabrata (strain ATCC 2001 / BCRC 20586 / JCM 3761 / NBRC 0622 / NRRL Y-65 / CBS 138) (Yeast), this protein is FK506-binding protein 2 (FPR2).